Reading from the N-terminus, the 473-residue chain is Photosystem II CP43 reaction center protein (473 aa).

Positions 1 to 14 (MKTLYSLRRFYHVE) are excised as a propeptide. T15 bears the N-acetylthreonine mark. The residue at position 15 (T15) is a Phosphothreonine. The next 5 helical transmembrane spans lie at 69 to 93 (LFEV…PHLA), 134 to 155 (LLGP…KDRN), 178 to 200 (KALY…RKIT), 255 to 275 (KPFA…LSYS), and 291 to 312 (WFNN…ASQA). E367 provides a ligand contact to [CaMn4O5] cluster. The chain crosses the membrane as a helical span at residues 447–471 (RARAAAAGFEKGIDRDFEPVLSMTP).

The protein belongs to the PsbB/PsbC family. PsbC subfamily. PSII is composed of 1 copy each of membrane proteins PsbA, PsbB, PsbC, PsbD, PsbE, PsbF, PsbH, PsbI, PsbJ, PsbK, PsbL, PsbM, PsbT, PsbX, PsbY, PsbZ, Psb30/Ycf12, at least 3 peripheral proteins of the oxygen-evolving complex and a large number of cofactors. It forms dimeric complexes. The cofactor is Binds multiple chlorophylls and provides some of the ligands for the Ca-4Mn-5O cluster of the oxygen-evolving complex. It may also provide a ligand for a Cl- that is required for oxygen evolution. PSII binds additional chlorophylls, carotenoids and specific lipids..

It is found in the plastid. It localises to the chloroplast thylakoid membrane. Its function is as follows. One of the components of the core complex of photosystem II (PSII). It binds chlorophyll and helps catalyze the primary light-induced photochemical processes of PSII. PSII is a light-driven water:plastoquinone oxidoreductase, using light energy to abstract electrons from H(2)O, generating O(2) and a proton gradient subsequently used for ATP formation. This Draba nemorosa (Woodland whitlowgrass) protein is Photosystem II CP43 reaction center protein.